The sequence spans 99 residues: uncharacterized protein (99 aa).

Disordered regions lie at residues 1–24 (MKAT…VRAT) and 49–99 (SVRT…RCAT). Composition is skewed to basic residues over residues 15 to 24 (VRRRRRVRAT) and 71 to 81 (SRRRGRPRSSR).

This is an uncharacterized protein from Streptomyces fradiae (Streptomyces roseoflavus).